Reading from the N-terminus, the 152-residue chain is Large ribosomal subunit protein bL9 (152 aa).

The protein belongs to the bacterial ribosomal protein bL9 family.

Its function is as follows. Binds to the 23S rRNA. This chain is Large ribosomal subunit protein bL9, found in Mycobacterium avium (strain 104).